A 147-amino-acid chain; its full sequence is Hemoglobin subunit beta-1 (147 aa).

At Val-2 the chain carries N-acetylvaline. The Globin domain occupies 3–147; that stretch reads HLTGEEKAAV…VATALAHKYH (145 aa). Position 18 is an N6-succinyllysine (Lys-18). Residue Ser-45 is modified to Phosphoserine. An N6-succinyllysine modification is found at Lys-60. Residues His-64 and His-93 each coordinate heme b. The residue at position 105 (Arg-105) is an Asymmetric dimethylarginine. Thr-124 bears the Phosphothreonine mark.

The protein belongs to the globin family. As to quaternary structure, hb1 is a heterotetramer of two alpha chains and two beta-1 chains. In terms of tissue distribution, red blood cells.

Functionally, involved in oxygen transport from the lung to the various peripheral tissues. The protein is Hemoglobin subunit beta-1 (HBB1) of Chalinolobus morio (Chocolate-wattled bat).